Here is an 88-residue protein sequence, read N- to C-terminus: MDLRLQQKILKYQQVRKYYVEDGYTIDEACKKVKINKTTFYNYRKLLKENNLLEIVETNNNINNILSSEVLNKKKIQSKKTTPKKKYN.

This is an uncharacterized protein from Sputnik virophage.